The following is a 450-amino-acid chain: MNSDGVWLDGSGESPEVNNGEAASWVRNPDEDWFNNPPPPQHTNQNDFRFNGGFPLNPSENLLLLLQQSIDSSSSSSPLLHPFTLDAASQQQQQQQQQQEQSFLATKACIVSLLNVPTINNNTFDDFGFDSGFLGQQFHGNHQSPNSMNFTGLNHSVPDFLPAPENSSGSCGLSPLFSNRAKVLKPLQVMASSGSQPTLFQKRAAMRQSSSSKMCNSESSSEMRKSSYEREIDDTSTGIIDISGLNYESDDHNTNNNKGKKKGMPAKNLMAERRRRKKLNDRLYMLRSVVPKISKMDRASILGDAIDYLKELLQRINDLHTELESTPPSSSSLHPLTPTPQTLSYRVKEELCPSSSLPSPKGQQPRVEVRLREGKAVNIHMFCGRRPGLLLSTMRALDNLGLDVQQAVISCFNGFALDVFRAEQCQEDHDVLPEQIKAVLLDTAGYAGLV.

Disordered stretches follow at residues 1 to 47 (MNSD…NQND), 207 to 231 (RQSS…YERE), and 244 to 265 (GLNY…KGMP). A compositionally biased stretch (low complexity) spans 209–220 (SSSSKMCNSESS). The span at 221-230 (SEMRKSSYER) shows a compositional bias: basic and acidic residues. Positions 263 to 312 (GMPAKNLMAERRRRKKLNDRLYMLRSVVPKISKMDRASILGDAIDYLKEL) constitute a bHLH domain. Residues 378 to 450 (NIHMFCGRRP…LDTAGYAGLV (73 aa)) enclose the ACT domain.

In terms of assembly, homodimer. Heterodimers with SPCH, MUTE, and FAMA. Expressed constitutively in roots, leaves, stems, and flowers. Broad expression within stomatal cell lineages of leaf epidermis, except in mature guard-cells.

It is found in the nucleus. Mediates stomatal differentiation in the epidermis probably by controlling successive roles of SPCH, MUTE, and FAMA. Functions as a dimer with SPCH during stomatal initiation. The polypeptide is Transcription factor SCREAM2 (SCRM2) (Arabidopsis thaliana (Mouse-ear cress)).